A 715-amino-acid chain; its full sequence is Polyribonucleotide nucleotidyltransferase (715 aa).

Positions 485 and 491 each coordinate Mg(2+). The KH domain occupies P552–I611. Residues N621 to K689 enclose the S1 motif domain. Residues T695–I715 are disordered.

It belongs to the polyribonucleotide nucleotidyltransferase family. As to quaternary structure, component of the RNA degradosome, which is a multiprotein complex involved in RNA processing and mRNA degradation. It depends on Mg(2+) as a cofactor.

The protein resides in the cytoplasm. The enzyme catalyses RNA(n+1) + phosphate = RNA(n) + a ribonucleoside 5'-diphosphate. Functionally, involved in mRNA degradation. Catalyzes the phosphorolysis of single-stranded polyribonucleotides processively in the 3'- to 5'-direction. This Actinobacillus pleuropneumoniae serotype 3 (strain JL03) protein is Polyribonucleotide nucleotidyltransferase.